Consider the following 220-residue polypeptide: Ribose-5-phosphate isomerase A (220 aa).

Residues 25 to 28, 80 to 83, and 93 to 96 contribute to the substrate site; these read TGST, DGAD, and KGGG. Glu-102 functions as the Proton acceptor in the catalytic mechanism. Lys-120 contacts substrate.

Belongs to the ribose 5-phosphate isomerase family. In terms of assembly, homodimer.

It catalyses the reaction aldehydo-D-ribose 5-phosphate = D-ribulose 5-phosphate. Its pathway is carbohydrate degradation; pentose phosphate pathway; D-ribose 5-phosphate from D-ribulose 5-phosphate (non-oxidative stage): step 1/1. In terms of biological role, catalyzes the reversible conversion of ribose-5-phosphate to ribulose 5-phosphate. The sequence is that of Ribose-5-phosphate isomerase A from Bacillus anthracis.